The chain runs to 276 residues: MCIIFFKFDPRPVSKNAYRLILAANRDEFYSRPSKLADFWGNNNEILSGLDMEEGKEGGTWLGISTRGKLAALTNYLQPQLDWQARGRGELVTHFLTTDVDSLSYLKKVSMEGHLYNGFNLIAADLSTAKGDVICYYGNRGEPDPIVLTPGTYGLSNALLETPWRKLCFGKQLFLEAVERSQALPKDVLIASLLDVLNNEEAQLPDPAIEDQGGEYVQPMLSKYAAVCVRCPGYGTRTNTIILVDADGHVTFTERSMMDKDLSHWETRTYEFTLQS.

It belongs to the Tango2 family.

It localises to the cytoplasm. It is found in the mitochondrion. Its subcellular location is the golgi apparatus. Its function is as follows. May be involved in lipid homeostasis. The protein is Transport and Golgi organization protein 2 homolog (TANGO2) of Homo sapiens (Human).